The primary structure comprises 143 residues: UPF0201 protein Tneu_0685 (143 aa).

The protein belongs to the UPF0201 family.

This chain is UPF0201 protein Tneu_0685, found in Pyrobaculum neutrophilum (strain DSM 2338 / JCM 9278 / NBRC 100436 / V24Sta) (Thermoproteus neutrophilus).